Reading from the N-terminus, the 370-residue chain is Chloromuconate cycloisomerase (370 aa).

The Proton acceptor role is filled by lysine 165. Mn(2+)-binding residues include aspartate 194, glutamate 220, and aspartate 245. The Proton donor role is filled by glutamate 323.

It belongs to the mandelate racemase/muconate lactonizing enzyme family. Mn(2+) serves as cofactor.

It catalyses the reaction 2-[(2R)-2-chloro-2,5-dihydro-5-oxofuryl]acetate = 3-chloro-cis,cis-muconate + H(+). It functions in the pathway aromatic compound metabolism; 3-chlorocatechol degradation. In Pseudomonas sp. (strain P51), this protein is Chloromuconate cycloisomerase (tcbD).